Here is a 102-residue protein sequence, read N- to C-terminus: Large ribosomal subunit protein uL24 (102 aa).

Positions 44–65 are disordered; the sequence is HAKPSQDNPQGGILNQEAPIHS.

It belongs to the universal ribosomal protein uL24 family. Part of the 50S ribosomal subunit.

Functionally, one of two assembly initiator proteins, it binds directly to the 5'-end of the 23S rRNA, where it nucleates assembly of the 50S subunit. One of the proteins that surrounds the polypeptide exit tunnel on the outside of the subunit. This Shouchella clausii (strain KSM-K16) (Alkalihalobacillus clausii) protein is Large ribosomal subunit protein uL24.